The sequence spans 509 residues: Ribonuclease E/G-like protein (509 aa).

Residues 35 to 117 (SDIYLGCVDK…LTANITLSGR (83 aa)) enclose the S1 motif domain. Asp-296 and Asp-339 together coordinate Mg(2+).

This sequence belongs to the RNase E/G family. Mg(2+) serves as cofactor.

Its subcellular location is the plastid. The protein localises to the chloroplast stroma. In terms of biological role, involved in intercistronic processing of primary transcripts from chloroplast operons. The endonucleolytic activity of the enzyme depends on the number of phosphates at the 5' end, is inhibited by structured RNA, and preferentially cleaves A/U-rich sequences. The sequence is that of Ribonuclease E/G-like protein (rne) from Pyropia yezoensis (Susabi-nori).